A 428-amino-acid chain; its full sequence is Histidinol dehydrogenase (428 aa).

The NAD(+) site is built by tyrosine 124, glutamine 186, and asparagine 209. Substrate-binding residues include serine 233, glutamine 255, and histidine 258. The Zn(2+) site is built by glutamine 255 and histidine 258. Catalysis depends on proton acceptor residues glutamate 322 and histidine 323. Residues histidine 323, aspartate 356, glutamate 410, and histidine 415 each contribute to the substrate site. Position 356 (aspartate 356) interacts with Zn(2+). Histidine 415 lines the Zn(2+) pocket.

Belongs to the histidinol dehydrogenase family. Zn(2+) serves as cofactor.

The catalysed reaction is L-histidinol + 2 NAD(+) + H2O = L-histidine + 2 NADH + 3 H(+). It participates in amino-acid biosynthesis; L-histidine biosynthesis; L-histidine from 5-phospho-alpha-D-ribose 1-diphosphate: step 9/9. Functionally, catalyzes the sequential NAD-dependent oxidations of L-histidinol to L-histidinaldehyde and then to L-histidine. The polypeptide is Histidinol dehydrogenase (Bacteroides fragilis (strain ATCC 25285 / DSM 2151 / CCUG 4856 / JCM 11019 / LMG 10263 / NCTC 9343 / Onslow / VPI 2553 / EN-2)).